The following is a 491-amino-acid chain: Cytochrome P450 2H2 (491 aa).

Cys436 lines the heme pocket.

It belongs to the cytochrome P450 family. Requires heme as cofactor.

It is found in the endoplasmic reticulum membrane. Its subcellular location is the microsome membrane. The enzyme catalyses an organic molecule + reduced [NADPH--hemoprotein reductase] + O2 = an alcohol + oxidized [NADPH--hemoprotein reductase] + H2O + H(+). In terms of biological role, cytochromes P450 are a group of heme-thiolate monooxygenases. In liver microsomes, this enzyme is involved in an NADPH-dependent electron transport pathway. It oxidizes a variety of structurally unrelated compounds, including steroids, fatty acids, and xenobiotics. The sequence is that of Cytochrome P450 2H2 (CYP2H2) from Gallus gallus (Chicken).